The primary structure comprises 276 residues: Formamidopyrimidine-DNA glycosylase (276 aa).

The active-site Schiff-base intermediate with DNA is the proline 2. The Proton donor role is filled by glutamate 3. The active-site Proton donor; for beta-elimination activity is lysine 60. Positions 93 and 112 each coordinate DNA. An FPG-type zinc finger spans residues asparagine 240–proline 274. The active-site Proton donor; for delta-elimination activity is the arginine 264.

The protein belongs to the FPG family. As to quaternary structure, monomer. Requires Zn(2+) as cofactor.

The catalysed reaction is Hydrolysis of DNA containing ring-opened 7-methylguanine residues, releasing 2,6-diamino-4-hydroxy-5-(N-methyl)formamidopyrimidine.. It carries out the reaction 2'-deoxyribonucleotide-(2'-deoxyribose 5'-phosphate)-2'-deoxyribonucleotide-DNA = a 3'-end 2'-deoxyribonucleotide-(2,3-dehydro-2,3-deoxyribose 5'-phosphate)-DNA + a 5'-end 5'-phospho-2'-deoxyribonucleoside-DNA + H(+). Involved in base excision repair of DNA damaged by oxidation or by mutagenic agents. Acts as a DNA glycosylase that recognizes and removes damaged bases. Has a preference for oxidized purines, such as 7,8-dihydro-8-oxoguanine (8-oxoG). Has AP (apurinic/apyrimidinic) lyase activity and introduces nicks in the DNA strand. Cleaves the DNA backbone by beta-delta elimination to generate a single-strand break at the site of the removed base with both 3'- and 5'-phosphates. In Bacillus cereus (strain ATCC 10987 / NRS 248), this protein is Formamidopyrimidine-DNA glycosylase.